The following is a 510-amino-acid chain: Coatomer subunit delta (510 aa).

An MHD domain is found at M270–L510.

Belongs to the adaptor complexes medium subunit family. Delta-COP subfamily. As to quaternary structure, oligomeric complex that consists of at least the alpha, beta, beta', gamma, delta, epsilon and zeta subunits.

Its subcellular location is the cytoplasm. The protein localises to the golgi apparatus membrane. The protein resides in the cytoplasmic vesicle. It localises to the COPI-coated vesicle membrane. The coatomer is a cytosolic protein complex that binds to dilysine motifs and reversibly associates with Golgi non-clathrin-coated vesicles, which further mediate biosynthetic protein transport from the ER, via the Golgi up to the trans Golgi network. Coatomer complex is required for budding from Golgi membranes, and is essential for the retrograde Golgi-to-ER transport of dilysine-tagged proteins. In mammals, the coatomer can only be recruited by membranes associated to ADP-ribosylation factors (ARFs), which are small GTP-binding proteins; the complex also influences the Golgi structural integrity, as well as the processing, activity, and endocytic recycling of LDL receptors. The chain is Coatomer subunit delta (ARCN1) from Gallus gallus (Chicken).